The primary structure comprises 69 residues: Conotoxin Eb6.19 (69 aa).

Positions 1–17 are cleaved as a signal peptide; that stretch reads VLIIAVLFLTACQLTTA. Positions 18 to 41 are excised as a propeptide; the sequence is ETYSRGRQKHRARRSTDKNSKWTR. Cystine bridges form between cysteine 43/cysteine 57, cysteine 50/cysteine 61, and cysteine 56/cysteine 68.

The protein belongs to the conotoxin O1 superfamily. As to expression, expressed by the venom duct.

It is found in the secreted. The chain is Conotoxin Eb6.19 (E1) from Conus ebraeus (Hebrew cone).